The primary structure comprises 764 residues: 5-methyltetrahydropteroyltriglutamate--homocysteine methyltransferase (764 aa).

Residues 19–22 (RELK) and Lys-113 contribute to the 5-methyltetrahydropteroyltri-L-glutamate site. L-homocysteine contacts are provided by residues 435–437 (IGS) and Glu-488. Residues 435-437 (IGS) and Glu-488 each bind L-methionine. Residues 519-520 (RC) and Trp-565 each bind 5-methyltetrahydropteroyltri-L-glutamate. Asp-603 is a binding site for L-homocysteine. Residue Asp-603 coordinates L-methionine. Position 609 (Glu-609) interacts with 5-methyltetrahydropteroyltri-L-glutamate. Zn(2+)-binding residues include His-645, Cys-647, and Glu-669. The Proton donor role is filled by His-698. Cys-730 is a binding site for Zn(2+).

The protein belongs to the vitamin-B12 independent methionine synthase family. Zn(2+) is required as a cofactor.

The enzyme catalyses 5-methyltetrahydropteroyltri-L-glutamate + L-homocysteine = tetrahydropteroyltri-L-glutamate + L-methionine. It participates in amino-acid biosynthesis; L-methionine biosynthesis via de novo pathway; L-methionine from L-homocysteine (MetE route): step 1/1. Catalyzes the transfer of a methyl group from 5-methyltetrahydrofolate to homocysteine resulting in methionine formation. The sequence is that of 5-methyltetrahydropteroyltriglutamate--homocysteine methyltransferase from Desulforamulus reducens (strain ATCC BAA-1160 / DSM 100696 / MI-1) (Desulfotomaculum reducens).